Reading from the N-terminus, the 72-residue chain is Translation initiation factor IF-1 (72 aa).

Positions 1-72 constitute an S1-like domain; that stretch reads MSKEDSFEME…SKGRITYRAR (72 aa).

The protein belongs to the IF-1 family. Component of the 30S ribosomal translation pre-initiation complex which assembles on the 30S ribosome in the order IF-2 and IF-3, IF-1 and N-formylmethionyl-tRNA(fMet); mRNA recruitment can occur at any time during PIC assembly.

The protein resides in the cytoplasm. In terms of biological role, one of the essential components for the initiation of protein synthesis. Stabilizes the binding of IF-2 and IF-3 on the 30S subunit to which N-formylmethionyl-tRNA(fMet) subsequently binds. Helps modulate mRNA selection, yielding the 30S pre-initiation complex (PIC). Upon addition of the 50S ribosomal subunit IF-1, IF-2 and IF-3 are released leaving the mature 70S translation initiation complex. The polypeptide is Translation initiation factor IF-1 (Pseudomonas savastanoi pv. phaseolicola (strain 1448A / Race 6) (Pseudomonas syringae pv. phaseolicola (strain 1448A / Race 6))).